A 128-amino-acid polypeptide reads, in one-letter code: Probable 4-amino-4-deoxy-L-arabinose-phosphoundecaprenol flippase subunit ArnF (128 aa).

Topologically, residues 1–5 (MKGYG) are cytoplasmic. A helical transmembrane segment spans residues 6–26 (WGIGSVVLVTVAQLILKWGMM). At 27 to 47 (NTPLMSLADINGQFVFNHLPQ) the chain is on the periplasmic side. The helical transmembrane segment at 48–68 (FIAVICGLAGYALSMLCWFFA) threads the bilayer. At 69-77 (LRYLPLNRA) the chain is on the cytoplasmic side. A helical transmembrane segment spans residues 78 to 98 (YPLLSLSYALVYLGAVSLPWF). Residues 99 to 101 (SES) lie on the Periplasmic side of the membrane. The helical transmembrane segment at 102 to 122 (ATLLKTLGAGFILLGIWLINT) threads the bilayer. At 123-128 (KPIAKD) the chain is on the cytoplasmic side.

This sequence belongs to the ArnF family. As to quaternary structure, heterodimer of ArnE and ArnF.

It localises to the cell inner membrane. The protein operates within bacterial outer membrane biogenesis; lipopolysaccharide biosynthesis. In terms of biological role, translocates 4-amino-4-deoxy-L-arabinose-phosphoundecaprenol (alpha-L-Ara4N-phosphoundecaprenol) from the cytoplasmic to the periplasmic side of the inner membrane. This chain is Probable 4-amino-4-deoxy-L-arabinose-phosphoundecaprenol flippase subunit ArnF, found in Yersinia enterocolitica serotype O:8 / biotype 1B (strain NCTC 13174 / 8081).